Here is a 905-residue protein sequence, read N- to C-terminus: Coatomer subunit beta' (905 aa).

WD repeat units lie at residues 13–52 (ARSD…LVKT), 55–94 (VCDL…RVHM), 97–136 (AHSD…SCSQ), 140–180 (GHTH…PNFT), 183–224 (GHEK…CVQT), 227–266 (GHAQ…LEST), 350–388 (SCEI…NKSF), and 390–425 (SAQE…KSFK). At lysine 627 the chain carries N6-acetyllysine. The WD 9 repeat unit spans residues 746 to 783 (IRTGRLPEAAFLARTYLPSQVSRVVKLWRENLSKVNQK). Residues 837–873 (EEAKGFQPSRPTAQQEPDGKPASSPVIMASQTTHKEE) form a disordered region. At serine 859 the chain carries Phosphoserine. A coiled-coil region spans residues 867-891 (QTTHKEEKSLLELEVDLDNLELEDI).

It belongs to the WD repeat COPB2 family. As to quaternary structure, oligomeric complex that consists of at least the alpha, beta, beta', gamma, delta, epsilon and zeta subunits. Probably interacts with PEX11A. Interacts with SCYL1. Interacts with JAGN1.

Its subcellular location is the cytoplasm. The protein resides in the cytosol. The protein localises to the golgi apparatus membrane. It localises to the cytoplasmic vesicle. It is found in the COPI-coated vesicle membrane. Functionally, the coatomer is a cytosolic protein complex that binds to dilysine motifs and reversibly associates with Golgi non-clathrin-coated vesicles, which further mediate biosynthetic protein transport from the ER, via the Golgi up to the trans Golgi network. Coatomer complex is required for budding from Golgi membranes, and is essential for the retrograde Golgi-to-ER transport of dilysine-tagged proteins. In mammals, the coatomer can only be recruited by membranes associated to ADP-ribosylation factors (ARFs), which are small GTP-binding proteins; the complex also influences the Golgi structural integrity, as well as the processing, activity, and endocytic recycling of LDL receptors. This coatomer complex protein, essential for Golgi budding and vesicular trafficking, is a selective binding protein (RACK) for protein kinase C, epsilon type. It binds to Golgi membranes in a GTP-dependent manner. The sequence is that of Coatomer subunit beta' (Copb2) from Mus musculus (Mouse).